A 347-amino-acid polypeptide reads, in one-letter code: GTP 3',8-cyclase (347 aa).

Residues 12–242 (FRPFGVLRLS…QRIDARWPLR (231 aa)) form the Radical SAM core domain. Arginine 19 provides a ligand contact to GTP. The [4Fe-4S] cluster site is built by cysteine 26 and cysteine 30. Residue tyrosine 32 participates in S-adenosyl-L-methionine binding. Cysteine 33 lines the [4Fe-4S] cluster pocket. GTP is bound at residue arginine 65. Glycine 69 contributes to the S-adenosyl-L-methionine binding site. Threonine 104 lines the GTP pocket. An S-adenosyl-L-methionine-binding site is contributed by serine 129. Lysine 178 contacts GTP. Methionine 212 lines the S-adenosyl-L-methionine pocket. [4Fe-4S] cluster-binding residues include cysteine 275 and cysteine 278. 280–282 (RLR) provides a ligand contact to GTP. Cysteine 292 lines the [4Fe-4S] cluster pocket.

Belongs to the radical SAM superfamily. MoaA family. In terms of assembly, monomer and homodimer. The cofactor is [4Fe-4S] cluster.

The enzyme catalyses GTP + AH2 + S-adenosyl-L-methionine = (8S)-3',8-cyclo-7,8-dihydroguanosine 5'-triphosphate + 5'-deoxyadenosine + L-methionine + A + H(+). It functions in the pathway cofactor biosynthesis; molybdopterin biosynthesis. In terms of biological role, catalyzes the cyclization of GTP to (8S)-3',8-cyclo-7,8-dihydroguanosine 5'-triphosphate. In Synechococcus sp. (strain WH7803), this protein is GTP 3',8-cyclase.